The sequence spans 80 residues: Adipogenin (80 aa).

The chain crosses the membrane as a helical span at residues 16–36; that stretch reads FLVFWLCLPVALLLFLTIVWL. Residue S63 is modified to Phosphoserine.

This sequence belongs to the adipogenin family. As to expression, selectively expressed in adipose tissue where it is particularly enriched in brown adipose tissue. In adipose tissue, expressed exclusively in adipocytes and not in the stromal-vascular cell population. Expressed at much lower levels in heart, stomach and muscle and barely detected in kidney and lung.

Its subcellular location is the membrane. It localises to the nucleus. Plays a role in stimulating adipocyte differentiation and development. The polypeptide is Adipogenin (Adig) (Mus musculus (Mouse)).